Here is a 786-residue protein sequence, read N- to C-terminus: Endonuclease MutS2 (786 aa).

Position 333–340 (333–340 (GPNTGGKT)) interacts with ATP. The interval 682–709 (EKIKPSKQSAAQRPVVKVSGGGMSGPST) is disordered. In terms of domain architecture, Smr spans 711–786 (LDLRGERYDQ…GSGATIVNFK (76 aa)).

Belongs to the DNA mismatch repair MutS family. MutS2 subfamily. As to quaternary structure, homodimer. Binds to stalled ribosomes, contacting rRNA.

Its function is as follows. Endonuclease that is involved in the suppression of homologous recombination and thus may have a key role in the control of bacterial genetic diversity. In terms of biological role, acts as a ribosome collision sensor, splitting the ribosome into its 2 subunits. Detects stalled/collided 70S ribosomes which it binds and splits by an ATP-hydrolysis driven conformational change. Acts upstream of the ribosome quality control system (RQC), a ribosome-associated complex that mediates the extraction of incompletely synthesized nascent chains from stalled ribosomes and their subsequent degradation. Probably generates substrates for RQC. The sequence is that of Endonuclease MutS2 from Lacticaseibacillus casei (strain BL23) (Lactobacillus casei).